We begin with the raw amino-acid sequence, 640 residues long: Phosphomethylpyrimidine synthase (640 aa).

Residues asparagine 235, methionine 264, tyrosine 293, histidine 329, 349–351, 390–393, and glutamate 429 contribute to the substrate site; these read SRG and DGLR. Position 433 (histidine 433) interacts with Zn(2+). Tyrosine 456 lines the substrate pocket. Histidine 497 contacts Zn(2+). Residues cysteine 577, cysteine 580, and cysteine 585 each coordinate [4Fe-4S] cluster.

This sequence belongs to the ThiC family. In terms of assembly, homodimer. Requires [4Fe-4S] cluster as cofactor.

It carries out the reaction 5-amino-1-(5-phospho-beta-D-ribosyl)imidazole + S-adenosyl-L-methionine = 4-amino-2-methyl-5-(phosphooxymethyl)pyrimidine + CO + 5'-deoxyadenosine + formate + L-methionine + 3 H(+). It participates in cofactor biosynthesis; thiamine diphosphate biosynthesis. In terms of biological role, catalyzes the synthesis of the hydroxymethylpyrimidine phosphate (HMP-P) moiety of thiamine from aminoimidazole ribotide (AIR) in a radical S-adenosyl-L-methionine (SAM)-dependent reaction. This chain is Phosphomethylpyrimidine synthase, found in Photobacterium profundum (strain SS9).